A 205-amino-acid polypeptide reads, in one-letter code: ATP phosphoribosyltransferase (205 aa).

The protein belongs to the ATP phosphoribosyltransferase family. Short subfamily. As to quaternary structure, heteromultimer composed of HisG and HisZ subunits.

It localises to the cytoplasm. It catalyses the reaction 1-(5-phospho-beta-D-ribosyl)-ATP + diphosphate = 5-phospho-alpha-D-ribose 1-diphosphate + ATP. Its pathway is amino-acid biosynthesis; L-histidine biosynthesis; L-histidine from 5-phospho-alpha-D-ribose 1-diphosphate: step 1/9. Functionally, catalyzes the condensation of ATP and 5-phosphoribose 1-diphosphate to form N'-(5'-phosphoribosyl)-ATP (PR-ATP). Has a crucial role in the pathway because the rate of histidine biosynthesis seems to be controlled primarily by regulation of HisG enzymatic activity. This Leptospira interrogans serogroup Icterohaemorrhagiae serovar Lai (strain 56601) protein is ATP phosphoribosyltransferase.